We begin with the raw amino-acid sequence, 612 residues long: Peroxisomal carnitine O-octanoyltransferase (612 aa).

Met1 is subject to N-acetylmethionine. An N6-succinyllysine mark is found at Lys40 and Lys57. Residue His327 is the Proton acceptor of the active site. CoA contacts are provided by residues Lys406 and 410 to 417 (KEEALHPD). Position 406 is an N6-acetyllysine; alternate (Lys406). Residue Lys406 is modified to N6-succinyllysine; alternate. Positions 439, 441, and 452 each coordinate (R)-carnitine. The short motif at 610 to 612 (AHL) is the Microbody targeting signal element.

This sequence belongs to the carnitine/choline acetyltransferase family.

The protein resides in the peroxisome. The enzyme catalyses octanoyl-CoA + (R)-carnitine = O-octanoyl-(R)-carnitine + CoA. It catalyses the reaction 4,8-dimethylnonanoyl-CoA + (R)-carnitine = O-4,8-dimethylnonanoyl-(R)-carnitine + CoA. The protein operates within lipid metabolism; fatty acid beta-oxidation. Beta-oxidation of fatty acids. The highest activity concerns the C6 to C10 chain length substrate. The sequence is that of Peroxisomal carnitine O-octanoyltransferase (Crot) from Mus musculus (Mouse).